The primary structure comprises 414 residues: Isocitrate dehydrogenase [NADP] cytoplasmic (414 aa).

Position 2 is an N-acetylserine (S2). Y42 carries the post-translational modification Phosphotyrosine. Residue 75–77 coordinates NADP(+); that stretch reads TIT. T77 lines the substrate pocket. The residue at position 81 (K81) is an N6-acetyllysine. R82 is an NADP(+) binding site. Residues 94–100 and R109 contribute to the substrate site; that span reads SPNGTIR. At K126 the chain carries N6-succinyllysine. The substrate site is built by R132 and K212. N6-acetyllysine occurs at positions 224, 233, and 243. D252 serves as a coordination point for Mn(2+). K260 serves as a coordination point for NADP(+). Mn(2+)-binding residues include D275 and D279. 310-315 is a binding site for NADP(+); that stretch reads GTVTRH. At K321 the chain carries N6-acetyllysine. An NADP(+)-binding site is contributed by N328. S389 carries the phosphoserine modification. N6-succinyllysine is present on K400.

The protein belongs to the isocitrate and isopropylmalate dehydrogenases family. As to quaternary structure, homodimer. It depends on Mg(2+) as a cofactor. Requires Mn(2+) as cofactor. In terms of processing, acetylation at Lys-374 dramatically reduces catalytic activity. As to expression, highly expressed in the liver followed by kidney, lower expression in spleen, brain and lung.

It is found in the cytoplasm. Its subcellular location is the cytosol. It catalyses the reaction D-threo-isocitrate + NADP(+) = 2-oxoglutarate + CO2 + NADPH. With respect to regulation, irreversibly inhibited by Cd(2+) concentrations above 50 uM. In terms of biological role, catalyzes the NADP(+)-dependent oxidative decarboxylation of isocitrate (D-threo-isocitrate) to 2-ketoglutarate (2-oxoglutarate), which is required by other enzymes such as the phytanoyl-CoA dioxygenase. Plays a critical role in the generation of NADPH, an important cofactor in many biosynthesis pathways. May act as a corneal epithelial crystallin and may be involved in maintaining corneal epithelial transparency. This is Isocitrate dehydrogenase [NADP] cytoplasmic (Idh1) from Mus musculus (Mouse).